The sequence spans 324 residues: Annexin A10 (324 aa).

Annexin repeat units lie at residues 17–88 (FNPI…GLMY), 89–160 (PPPL…NLVQ), 171–243 (AMAA…AIVL), and 247–318 (DKPA…AICA).

This sequence belongs to the annexin family.

This is Annexin A10 (ANXA10) from Homo sapiens (Human).